A 572-amino-acid chain; its full sequence is Sulfite reductase [NADPH] hemoprotein beta-component (572 aa).

[4Fe-4S] cluster contacts are provided by cysteine 437, cysteine 443, cysteine 482, and cysteine 486. Cysteine 486 contacts siroheme.

It belongs to the nitrite and sulfite reductase 4Fe-4S domain family. As to quaternary structure, alpha(8)-beta(8). The alpha component is a flavoprotein, the beta component is a hemoprotein. It depends on siroheme as a cofactor. Requires [4Fe-4S] cluster as cofactor.

It catalyses the reaction hydrogen sulfide + 3 NADP(+) + 3 H2O = sulfite + 3 NADPH + 4 H(+). The protein operates within sulfur metabolism; hydrogen sulfide biosynthesis; hydrogen sulfide from sulfite (NADPH route): step 1/1. Component of the sulfite reductase complex that catalyzes the 6-electron reduction of sulfite to sulfide. This is one of several activities required for the biosynthesis of L-cysteine from sulfate. This Lysinibacillus sphaericus (strain C3-41) protein is Sulfite reductase [NADPH] hemoprotein beta-component.